The chain runs to 395 residues: Chaperone protein DnaJ (395 aa).

Residues 5 to 70 (DFYEVLGVDK…NKRAAYDRMG (66 aa)) enclose the J domain. The CR-type zinc-finger motif lies at 145 to 223 (GKDETIKVPT…CDGVGRVRKT (79 aa)). Zn(2+)-binding residues include Cys-158, Cys-161, Cys-175, Cys-178, Cys-197, Cys-200, Cys-211, and Cys-214. CXXCXGXG motif repeat units follow at residues 158–165 (CERCDGQG), 175–182 (CGTCQGAG), 197–204 (CPQCGGRG), and 211–218 (CNDCDGVG).

It belongs to the DnaJ family. As to quaternary structure, homodimer. Zn(2+) serves as cofactor.

It is found in the cytoplasm. Its function is as follows. Participates actively in the response to hyperosmotic and heat shock by preventing the aggregation of stress-denatured proteins and by disaggregating proteins, also in an autonomous, DnaK-independent fashion. Unfolded proteins bind initially to DnaJ; upon interaction with the DnaJ-bound protein, DnaK hydrolyzes its bound ATP, resulting in the formation of a stable complex. GrpE releases ADP from DnaK; ATP binding to DnaK triggers the release of the substrate protein, thus completing the reaction cycle. Several rounds of ATP-dependent interactions between DnaJ, DnaK and GrpE are required for fully efficient folding. Also involved, together with DnaK and GrpE, in the DNA replication of plasmids through activation of initiation proteins. This is Chaperone protein DnaJ from Maricaulis maris (strain MCS10) (Caulobacter maris).